The following is a 189-amino-acid chain: Ras-like protein rasG (189 aa).

10-17 (GGGGVGKS) contributes to the GTP binding site. Residues 32–40 (YDPTIEDSY) carry the Effector region motif. GTP is bound by residues 57–61 (DTAGQ) and 116–119 (NKCD). The tract at residues 169-189 (KGDSKPEKGKKKRPLKACTLL) is disordered. Cys-186 carries the post-translational modification Cysteine methyl ester. A lipid anchor (S-geranylgeranyl cysteine) is attached at Cys-186. A propeptide spans 187 to 189 (TLL) (removed in mature form).

Belongs to the small GTPase superfamily. Ras family. Interacts with ripA.

The protein resides in the cell membrane. It carries out the reaction GTP + H2O = GDP + phosphate + H(+). With respect to regulation, alternates between an inactive form bound to GDP and an active form bound to GTP. Activated by a guanine nucleotide-exchange factor (GEF) and inactivated by a GTPase-activating protein (GAP). Ras proteins bind GDP/GTP and possess intrinsic GTPase activity. This chain is Ras-like protein rasG (rasG), found in Dictyostelium discoideum (Social amoeba).